Consider the following 439-residue polypeptide: Ribosomal protein uS12 methylthiotransferase RimO (439 aa).

The MTTase N-terminal domain occupies 5–117 (KKLHLISLGC…IDELIASKQS (113 aa)). Cys-14, Cys-48, Cys-80, Cys-149, Cys-153, and Cys-156 together coordinate [4Fe-4S] cluster. The 229-residue stretch at 135–363 (TGSNYHAYIK…GEIAERSTLR (229 aa)) folds into the Radical SAM core domain. In terms of domain architecture, TRAM spans 366–437 (EKMVGKTVEL…GMQLLATLIK (72 aa)).

Belongs to the methylthiotransferase family. RimO subfamily. [4Fe-4S] cluster is required as a cofactor.

It is found in the cytoplasm. It carries out the reaction L-aspartate(89)-[ribosomal protein uS12]-hydrogen + (sulfur carrier)-SH + AH2 + 2 S-adenosyl-L-methionine = 3-methylsulfanyl-L-aspartate(89)-[ribosomal protein uS12]-hydrogen + (sulfur carrier)-H + 5'-deoxyadenosine + L-methionine + A + S-adenosyl-L-homocysteine + 2 H(+). In terms of biological role, catalyzes the methylthiolation of an aspartic acid residue of ribosomal protein uS12. This is Ribosomal protein uS12 methylthiotransferase RimO from Sulfurovum sp. (strain NBC37-1).